The chain runs to 154 residues: Ribosome maturation factor RimP (154 aa).

This sequence belongs to the RimP family.

Its subcellular location is the cytoplasm. Required for maturation of 30S ribosomal subunits. In Acetivibrio thermocellus (strain ATCC 27405 / DSM 1237 / JCM 9322 / NBRC 103400 / NCIMB 10682 / NRRL B-4536 / VPI 7372) (Clostridium thermocellum), this protein is Ribosome maturation factor RimP.